The primary structure comprises 268 residues: Putative hydro-lyase ABAYE2440 (268 aa).

This sequence belongs to the D-glutamate cyclase family.

The polypeptide is Putative hydro-lyase ABAYE2440 (Acinetobacter baumannii (strain AYE)).